Here is a 207-residue protein sequence, read N- to C-terminus: Ribonuclease HII (207 aa).

The RNase H type-2 domain maps to 12 to 201 (DLVAGVDEVG…VRAAWEVREG (190 aa)). Residues Asp-18, Glu-19, and Asp-110 each contribute to the a divalent metal cation site.

The protein belongs to the RNase HII family. Requires Mn(2+) as cofactor. Mg(2+) is required as a cofactor.

Its subcellular location is the cytoplasm. The catalysed reaction is Endonucleolytic cleavage to 5'-phosphomonoester.. In terms of biological role, endonuclease that specifically degrades the RNA of RNA-DNA hybrids. The chain is Ribonuclease HII from Pseudomonas putida (strain ATCC 700007 / DSM 6899 / JCM 31910 / BCRC 17059 / LMG 24140 / F1).